The sequence spans 5801 residues: uncharacterized protein (5801 aa).

Disordered regions lie at residues 1114-1136, 1827-1846, 2040-2109, 3351-3392, 5134-5168, 5478-5573, and 5600-5638; these read DDDN…NKKI, KDRS…SINN, NNGE…SPLF, EKSN…NNSG, DNNN…SESD, ISDP…EDII, and HDKD…ETPG. Composition is skewed to low complexity over residues 1118-1134, 1831-1846, 2048-2096, 3353-3392, and 5135-5153; these read NNSN…NNNK, SSSS…SINN, QQLQ…QQQQ, SNNN…NNSG, and NNNN…NNNN. Positions 5496-5573 are enriched in acidic residues; it reads DNEEEEEDDD…EDEDEDEDII (78 aa). Basic and acidic residues predominate over residues 5617 to 5629; the sequence is QQPEKPQQPEKPQ.

This is an uncharacterized protein from Dictyostelium discoideum (Social amoeba).